We begin with the raw amino-acid sequence, 249 residues long: Metallo-beta-lactamase type 2 (249 aa).

A signal peptide spans 1 to 18 (MKTVFILISMLFPVAVMA). Zn(2+)-binding residues include His99, His101, Asp103, His162, and Cys181. The substrate site is built by Lys184 and Asn193. Zn(2+) is bound at residue His223.

The protein belongs to the metallo-beta-lactamase superfamily. Class-B beta-lactamase family. In terms of assembly, monomer. The cofactor is Zn(2+).

The protein localises to the periplasm. It catalyses the reaction a beta-lactam + H2O = a substituted beta-amino acid. Its activity is regulated as follows. Competitively inhibited by 4-morpholineethanesulfonic acid (MES), SB236050 and biphenyl tetrazoles (BPTs). Also inhibited by chelating agents such as EDTA and 1,10-phenanthroline. CcrA is not susceptible to inactivation by the beta-lactamase-blocking agents clavulanic acid or tazobactam. Its function is as follows. Confers resistance to the different beta-lactams antibiotics (penicillin, cephalosporin and carbapenem) via the hydrolysis of the beta-lactam ring. This chain is Metallo-beta-lactamase type 2, found in Bacteroides fragilis.